Consider the following 124-residue polypeptide: Small ribosomal subunit protein bS6 (124 aa).

Belongs to the bacterial ribosomal protein bS6 family.

Binds together with bS18 to 16S ribosomal RNA. In Chromobacterium violaceum (strain ATCC 12472 / DSM 30191 / JCM 1249 / CCUG 213 / NBRC 12614 / NCIMB 9131 / NCTC 9757 / MK), this protein is Small ribosomal subunit protein bS6.